The primary structure comprises 811 residues: Phenylalanine--tRNA ligase beta subunit (811 aa).

The tRNA-binding domain occupies 39 to 151; the sequence is RTWAAGVVVG…AGLQAGQPVG (113 aa). Residues 409-495 enclose the B5 domain; sequence EPEHSITLRL…RLYGYDNFGE (87 aa). Residues D473, D479, E482, and E483 each contribute to the Mg(2+) site. The 94-residue stretch at 717–810 folds into the FDX-ACB domain; that stretch reads SSFPASDRDL…LVERFRVTLR (94 aa).

This sequence belongs to the phenylalanyl-tRNA synthetase beta subunit family. Type 1 subfamily. Tetramer of two alpha and two beta subunits. The cofactor is Mg(2+).

Its subcellular location is the cytoplasm. It carries out the reaction tRNA(Phe) + L-phenylalanine + ATP = L-phenylalanyl-tRNA(Phe) + AMP + diphosphate + H(+). The sequence is that of Phenylalanine--tRNA ligase beta subunit from Synechococcus sp. (strain ATCC 27144 / PCC 6301 / SAUG 1402/1) (Anacystis nidulans).